The chain runs to 317 residues: Single myb histone 6 (317 aa).

In terms of domain architecture, HTH myb-type spans 1–61 (MGAPKQRWTS…KWRNMNVIVS (61 aa)). Residues 28–57 (WRTILKDPEFSSTLCYRSNVDLKDKWRNMN) constitute a DNA-binding region (H-T-H motif). An H15 domain is found at 121–189 (KSHRLDNIIM…KVNRKYRIAP (69 aa)). Positions 244 to 288 (VAAARAVAEAEAIMAEAEAAAKEAEAAEAEAQAAQAFAEAAFLTL) form a coiled coil.

It belongs to the histone H1/H5 family. SMH subfamily. Forms a homodimer and heterodimers.

The protein localises to the nucleus. The protein resides in the chromosome. It localises to the nucleolus. Its subcellular location is the telomere. Its function is as follows. Binds preferentially double-stranded telomeric repeats, but may also bind to the single telomeric strand. The chain is Single myb histone 6 (SMH6) from Zea mays (Maize).